Consider the following 191-residue polypeptide: Leucyl/phenylalanyl-tRNA--protein transferase (191 aa).

This sequence belongs to the L/F-transferase family.

The protein resides in the cytoplasm. The catalysed reaction is N-terminal L-lysyl-[protein] + L-leucyl-tRNA(Leu) = N-terminal L-leucyl-L-lysyl-[protein] + tRNA(Leu) + H(+). It catalyses the reaction N-terminal L-arginyl-[protein] + L-leucyl-tRNA(Leu) = N-terminal L-leucyl-L-arginyl-[protein] + tRNA(Leu) + H(+). It carries out the reaction L-phenylalanyl-tRNA(Phe) + an N-terminal L-alpha-aminoacyl-[protein] = an N-terminal L-phenylalanyl-L-alpha-aminoacyl-[protein] + tRNA(Phe). In terms of biological role, functions in the N-end rule pathway of protein degradation where it conjugates Leu, Phe and, less efficiently, Met from aminoacyl-tRNAs to the N-termini of proteins containing an N-terminal arginine or lysine. The polypeptide is Leucyl/phenylalanyl-tRNA--protein transferase (Nostoc sp. (strain PCC 7120 / SAG 25.82 / UTEX 2576)).